Consider the following 229-residue polypeptide: Cytidylate kinase (229 aa).

ATP is bound at residue Gly-12–Thr-20.

Belongs to the cytidylate kinase family. Type 1 subfamily.

The protein localises to the cytoplasm. The enzyme catalyses CMP + ATP = CDP + ADP. The catalysed reaction is dCMP + ATP = dCDP + ADP. This is Cytidylate kinase from Pseudomonas fluorescens (strain SBW25).